Consider the following 72-residue polypeptide: UPF0154 protein BPUM_1692 (72 aa).

A helical membrane pass occupies residues Trp-4–Ile-24.

The protein belongs to the UPF0154 family.

It is found in the cell membrane. In Bacillus pumilus (strain SAFR-032), this protein is UPF0154 protein BPUM_1692.